A 903-amino-acid polypeptide reads, in one-letter code: Probable dipeptidyl-aminopeptidase B (903 aa).

The interval 1 to 83 is disordered; sequence MGKFEDDGNS…PLISSGTKTG (83 aa). Residues 1 to 90 lie on the Cytoplasmic side of the membrane; sequence MGKFEDDGNS…KTGSSSRLRK (90 aa). Residues 10–37 show a composition bias toward polar residues; that stretch reads SESVPLTRQRSESLASQTSTDSGLSIAS. Residues 91 to 111 traverse the membrane as a helical; Signal-anchor for type II membrane protein segment; it reads IVWLLVLLCVGGWVLSFVLFL. Residues 112–903 are Vacuolar-facing; it reads TQKRPDTAAL…TANPKPQEST (792 aa). Positions 121-143 are disordered; the sequence is LSSASTVEIHEPGPATGGTSHGK. N-linked (GlcNAc...) asparagine glycosylation is found at Asn-268, Asn-349, and Asn-640. The Charge relay system role is filled by Ser-754. Asn-808 carries N-linked (GlcNAc...) asparagine glycosylation. Active-site charge relay system residues include Asp-831 and His-864.

Belongs to the peptidase S9B family.

Its subcellular location is the vacuole membrane. The enzyme catalyses Release of an N-terminal dipeptide, Xaa-Yaa-|-Zaa-, from a polypeptide, preferentially when Yaa is Pro, provided Zaa is neither Pro nor hydroxyproline.. Functionally, type IV dipeptidyl-peptidase which removes N-terminal dipeptides sequentially from polypeptides having unsubstituted N-termini provided that the penultimate residue is proline. This is Probable dipeptidyl-aminopeptidase B (dapB) from Penicillium rubens (strain ATCC 28089 / DSM 1075 / NRRL 1951 / Wisconsin 54-1255) (Penicillium chrysogenum).